A 228-amino-acid chain; its full sequence is 2-C-methyl-D-erythritol 4-phosphate cytidylyltransferase (228 aa).

The protein belongs to the IspD/TarI cytidylyltransferase family. IspD subfamily.

It catalyses the reaction 2-C-methyl-D-erythritol 4-phosphate + CTP + H(+) = 4-CDP-2-C-methyl-D-erythritol + diphosphate. It functions in the pathway isoprenoid biosynthesis; isopentenyl diphosphate biosynthesis via DXP pathway; isopentenyl diphosphate from 1-deoxy-D-xylulose 5-phosphate: step 2/6. Catalyzes the formation of 4-diphosphocytidyl-2-C-methyl-D-erythritol from CTP and 2-C-methyl-D-erythritol 4-phosphate (MEP). This chain is 2-C-methyl-D-erythritol 4-phosphate cytidylyltransferase, found in Crocosphaera subtropica (strain ATCC 51142 / BH68) (Cyanothece sp. (strain ATCC 51142)).